A 177-amino-acid polypeptide reads, in one-letter code: Large ribosomal subunit protein uL6 (177 aa).

Belongs to the universal ribosomal protein uL6 family. Part of the 50S ribosomal subunit.

This protein binds to the 23S rRNA, and is important in its secondary structure. It is located near the subunit interface in the base of the L7/L12 stalk, and near the tRNA binding site of the peptidyltransferase center. The sequence is that of Large ribosomal subunit protein uL6 from Brucella anthropi (strain ATCC 49188 / DSM 6882 / CCUG 24695 / JCM 21032 / LMG 3331 / NBRC 15819 / NCTC 12168 / Alc 37) (Ochrobactrum anthropi).